A 120-amino-acid chain; its full sequence is UPF0344 protein BCAH187_A1308 (120 aa).

4 consecutive transmembrane segments (helical) span residues 6 to 26 (ITAW…YSAG), 32 to 52 (VHMG…WLYL), 64 to 84 (WYGL…MVLV), and 91 to 111 (ATGA…YLGL).

Belongs to the UPF0344 family.

The protein localises to the cell membrane. This is UPF0344 protein BCAH187_A1308 from Bacillus cereus (strain AH187).